A 425-amino-acid chain; its full sequence is Synaptotagmin-4 (425 aa).

At methionine 1–threonine 16 the chain is on the vesicular side. Residues valine 17–cysteine 37 form a helical membrane-spanning segment. At cysteine 38–glycine 425 the chain is on the cytoplasmic side. Residues phenylalanine 73 to asparagine 83 are compositionally biased toward basic and acidic residues. 2 disordered regions span residues phenylalanine 73 to histidine 93 and leucine 127 to serine 147. Serine 135 is modified (phosphoserine; by MAPK8). Over residues serine 135–threonine 146 the composition is skewed to low complexity. C2 domains follow at residues lysine 153–asparagine 274 and glycine 287–histidine 420. Ca(2+)-binding residues include aspartate 246, serine 249, and aspartate 252.

This sequence belongs to the synaptotagmin family. As to quaternary structure, interacts with KIF1A; the interaction increases in presence of calcium and decreases when SYT4 is phosphorylated at Ser-135. Ca(2+) serves as cofactor. In terms of processing, phosphorylation at Ser-135 by MAPK8/JNK1 reduces interaction with KIF1A and neuronal dense core vesicles mobility. As to expression, expressed in melanocytes. Expressed in brain. Within brain, expression is highest in hippocampus, with substantial levels also detected in amygdala and thalamus.

It is found in the cytoplasmic vesicle. It localises to the secretory vesicle. The protein localises to the neuronal dense core vesicle membrane. In terms of biological role, synaptotagmin family member which does not bind Ca(2+). Involved in neuronal dense core vesicles (DCVs) mobility through its interaction with KIF1A. Upon increased neuronal activity, phosphorylation by MAPK8/JNK1 destabilizes the interaction with KIF1A and captures DCVs to synapses. Plays a role in dendrite formation by melanocytes. The polypeptide is Synaptotagmin-4 (SYT4) (Homo sapiens (Human)).